Consider the following 1263-residue polypeptide: Condensin complex subunit dpy-26 (1263 aa).

The segment covering 1–10 (MDVPSSSNVT) has biased composition (polar residues). Residues 1–29 (MDVPSSSNVTGRRKRQVLDDDEDDGFRST) are disordered. The stretch at 691–725 (NEQMDETEVEERNEQDVQRELEDIALAADEVAELM) forms a coiled coil. 2 disordered regions span residues 1098–1118 (YQAA…GTAN) and 1225–1263 (FSNL…EMEE). The span at 1106–1118 (NNQPTTSTYGTAN) shows a compositional bias: polar residues. Positions 1230-1241 (RRPKAVPVRKGR) are enriched in basic residues.

As to quaternary structure, component of the condensin I complex, which contains the mix-1/SMC2 and smc-4/SMC4 heterodimer, and three non SMC subunits that probably regulate the complex: dpy-26, capg-1 and dpy-28. Within the complex, interacts with dpy-28, mix-1, smc-4 and capg-1. Component of the dosage compensation complex, which consists of the condensin I-like components mix-1/SMC2 and dpy-27/SMC4, and the three non SMC subunits dpy-26, capg-1 and dpy-28. Within the complex, interacts with dpy-27, dpy-28, mix-1 and capg-1. The interaction with dpy-27 is required for dpy-27 protein stability. Interacts with smcl-1. In terms of tissue distribution, expressed in embryos and in somatic and germline tissues in L4 stage larvae (at protein level).

The protein resides in the nucleus. The protein localises to the chromosome. In terms of biological role, required for both chromosome condensation and segregation and for X-chromosome dosage compensation depending on its binding partners. Member of the condensin I complex, a complex required for conversion of interphase chromatin into mitotic-like condense chromosomes and for proper chromosome segregation in mitosis and meiosis. As a member of the condensin I complex, further controls the crossover number and distribution in meiosis by restricting double strand break formation, probably by influencing higher-order chromosome structure. Plays a role in robust cytokinesis upon presence of chromatin obstructions. Also a member of the condensin I-like dosage compensation complex that associates specifically with hermaphrodite X chromosomes to reduce their gene transcription during interphase, possibly through chromatin reorganization. As a member of the dosage compensation complex, also binds to regulatory regions of the autosomal her-1 gene, required for male development, possibly contributing to its repression in hermaphrodites. This is Condensin complex subunit dpy-26 from Caenorhabditis elegans.